Reading from the N-terminus, the 20-residue chain is Maximin-Hu (20 aa).

This sequence belongs to the bombinin family. Expressed by the skin glands.

It is found in the secreted. Its function is as follows. Has antimicrobial activity. This is Maximin-Hu from Bombina maxima (Giant fire-bellied toad).